A 388-amino-acid polypeptide reads, in one-letter code: STE20-related kinase adapter protein strd-1 (388 aa).

A Protein kinase domain is found at 52–335; sequence YDCVRYMGTC…ASDLKSSAWL (284 aa). ATP contacts are provided by residues 58-66 and K82; that span reads MGTCNGGQI.

It belongs to the protein kinase superfamily. STE Ser/Thr protein kinase family. STE20 subfamily. Interacts with sad-1. Interacts with par-4. As to expression, expressed in nervous system, pharynx and excretory canal. Expressed in germline.

The protein localises to the perikaryon. Its subcellular location is the nucleus. It is found in the cell projection. The protein resides in the dendrite. It localises to the axon. The protein localises to the synapse. Its subcellular location is the cytoplasm. It is found in the cell cortex. Pseudokinase which may act as an adapter for kinases sad-1 and par-4 and thereby is involved in several developmental processes. Regulates cell-autonomously both neuronal polarity and synaptic organization when bound to sad-1. Required for sad-1 localization to synapses. Required to establish germline stem cell (GSC) quiescence during dauer development, to promote cell shedding during embryogenesis and to control asymmetric cell division of the Q.p neuroblast lineage, probably when bound to par-4. May be involved in maintaining the integrity of the early embryonic cortex when bound to par-4. This is STE20-related kinase adapter protein strd-1 from Caenorhabditis elegans.